The chain runs to 652 residues: Carboxypeptidase S1 homolog A (652 aa).

The first 19 residues, 1–19 (MRLAASIAVALPVIGAASA), serve as a signal peptide directing secretion. Residues Cys-50 and Cys-121 are joined by a disulfide bond. 6 N-linked (GlcNAc...) asparagine glycosylation sites follow: Asn-77, Asn-132, Asn-161, Asn-168, Asn-184, and Asn-202. Ser-238 is a catalytic residue. N-linked (GlcNAc...) asparagine glycans are attached at residues Asn-260, Asn-299, Asn-347, and Asn-410. 2 disulfides stabilise this stretch: Cys-325-Cys-361 and Cys-332-Cys-354. The active site involves Asp-458. Cys-461 is a binding site for substrate. Residues Asn-474, Asn-492, and Asn-505 are each glycosylated (N-linked (GlcNAc...) asparagine). Residue His-516 is part of the active site. Glu-517 provides a ligand contact to substrate. The N-linked (GlcNAc...) asparagine glycan is linked to Asn-594. The disordered stretch occupies residues 608 to 628 (AASKGNPPPTTTSSPTASPTA). Positions 618 to 628 (TTSSPTASPTA) are enriched in low complexity. Residue Gly-629 is the site of GPI-anchor amidated glycine attachment. Positions 630–652 (SAMLKAPVAMLAISALTVLAFYL) are cleaved as a propeptide — removed in mature form.

Belongs to the peptidase S10 family.

It is found in the cell membrane. The enzyme catalyses Preferential release of a C-terminal arginine or lysine residue.. Functionally, extracellular serine carboxypeptidase that contributes to pathogenicity. This Arthroderma benhamiae (strain ATCC MYA-4681 / CBS 112371) (Trichophyton mentagrophytes) protein is Carboxypeptidase S1 homolog A (SCPA).